Here is a 397-residue protein sequence, read N- to C-terminus: Ribosomal RNA large subunit methyltransferase I (397 aa).

A PUA domain is found at 2–79 (SASIYLVKGR…KEETVDLDFF (78 aa)).

It belongs to the methyltransferase superfamily. RlmI family.

It is found in the cytoplasm. The catalysed reaction is cytidine(1962) in 23S rRNA + S-adenosyl-L-methionine = 5-methylcytidine(1962) in 23S rRNA + S-adenosyl-L-homocysteine + H(+). In terms of biological role, specifically methylates the cytosine at position 1962 (m5C1962) of 23S rRNA. The protein is Ribosomal RNA large subunit methyltransferase I of Aeromonas hydrophila subsp. hydrophila (strain ATCC 7966 / DSM 30187 / BCRC 13018 / CCUG 14551 / JCM 1027 / KCTC 2358 / NCIMB 9240 / NCTC 8049).